The following is a 96-amino-acid chain: Toxin ParE1 (96 aa).

This sequence belongs to the RelE toxin family. In terms of assembly, forms a ParD1(2)-ParE1(2) heterotetramer.

Toxic component of a type II toxin-antitoxin (TA) system. Its toxic effect is neutralized by coexpression with cognate antitoxin ParD1 but no other ParD or RelB antitoxin. Low levels of wild-type toxin in the absence of antitoxin decreases the rate of cell growth, and results in death or loss of colony formation abilities and greatly elongated cells. Low levels of a mutant missing the last 4 residues leads to loss of cell division while cell elongation continues. This Caulobacter vibrioides (strain ATCC 19089 / CIP 103742 / CB 15) (Caulobacter crescentus) protein is Toxin ParE1 (parE1).